The following is a 334-amino-acid chain: GTPase Obg (334 aa).

An Obg domain is found at methionine 1–leucine 159. An OBG-type G domain is found at alanine 160–glutamine 331. GTP contacts are provided by residues glycine 166–serine 173, phenylalanine 191–tyrosine 195, aspartate 212–glycine 215, asparagine 282–aspartate 285, and serine 312–alanine 314. The Mg(2+) site is built by serine 173 and threonine 193.

This sequence belongs to the TRAFAC class OBG-HflX-like GTPase superfamily. OBG GTPase family. As to quaternary structure, monomer. Requires Mg(2+) as cofactor.

Its subcellular location is the cytoplasm. Functionally, an essential GTPase which binds GTP, GDP and possibly (p)ppGpp with moderate affinity, with high nucleotide exchange rates and a fairly low GTP hydrolysis rate. Plays a role in control of the cell cycle, stress response, ribosome biogenesis and in those bacteria that undergo differentiation, in morphogenesis control. This chain is GTPase Obg, found in Francisella tularensis subsp. tularensis (strain FSC 198).